The sequence spans 455 residues: Killer cell immunoglobulin-like receptor 3DL2 (455 aa).

Residues 1 to 21 (MSLTVVSMACVGFFLLQGAWP) form the signal peptide. Residues 22–340 (LMGGQDKPFL…SKSGICRHLH (319 aa)) lie on the Extracellular side of the membrane. 3 Ig-like C2-type domains span residues 42-102 (GGHV…RPHS), 137-202 (GETV…VPHS), and 237-300 (GENV…FRAL). Intrachain disulfides connect Cys49–Cys95 and Cys144–Cys195. Residues Asn179, Asn239, Asn273, and Asn306 are each glycosylated (N-linked (GlcNAc...) asparagine). An intrachain disulfide couples Cys244 to Cys293. A helical transmembrane segment spans residues 341 to 360 (VLIGTSVVIFLFILLLFFLL). Residues 361–455 (YRWCSNKKNA…APQSGLEGVF (95 aa)) lie on the Cytoplasmic side of the membrane.

This sequence belongs to the immunoglobulin superfamily. Interacts with peptide-free HLA-F open conformer. Expressed in astrocytes.

The protein resides in the cell membrane. Receptor on natural killer (NK) cells and T cells for MHC class I molecules. Upon binding of peptide-free HLA-F open conformer, negatively regulates NK and T cell effector functions. Acts as a receptor on astrocytes for HLA-F. Through interaction with HLA-F, may protect motor neurons from astrocyte-induced toxicity. The sequence is that of Killer cell immunoglobulin-like receptor 3DL2 from Homo sapiens (Human).